The following is a 597-amino-acid chain: Protein GRISEA (597 aa).

Positions 1 to 41 (MPIINGQKMACGPCIRGHRSTKCNHYNERVMVPVRKPGRPL) form a DNA-binding region, copper-fist. Positions 11, 14, 23, and 25 each coordinate Zn(2+). Disordered regions lie at residues 70-115 (PAGT…ASRR), 233-352 (AFVD…PGFG), 407-428 (SRPP…NGNN), and 467-541 (SPNS…SPAL). Positions 92 to 103 (SPASRTSSNRVT) are enriched in polar residues. Low complexity predominate over residues 104–115 (KSGSGSKSASRR). Residues 269–281 (GGSGGGGCCGGGK) show a composition bias toward gly residues. Positions 287-314 (QAPPPVPAPLPTPPQQQMPNIMPPPQPQ) are enriched in pro residues. The segment covering 469–495 (NSSHGNSGSADSSANASPSANPLNLAS) has biased composition (low complexity). The span at 521–530 (ANESDGSSNA) shows a compositional bias: polar residues.

It is found in the nucleus. Copper-sensing transcription factor that regulates copper uptake by transactivation of Ctr3, a high affinity copper permease. Binds to the palindromic UAS sequence 5'-TGTTGCTCANNNNAGAGCAACT-3'. Also transactivates Sod2, a mitochondrial manganese superoxide dismutase through the palindromic UAS sequence 5'-GTTTGCTCA-3' with 352 bp separating the two inverted repeats. Loss of function indirectly leads to rearrangement of mitochondrial DNA associated with senescence in wild-type strains. The polypeptide is Protein GRISEA (Podospora anserina (Pleurage anserina)).